We begin with the raw amino-acid sequence, 395 residues long: Probable sugar efflux transporter (395 aa).

The next 12 membrane-spanning stretches (helical) occupy residues 13 to 33 (VVSL…PVAL), 48 to 68 (VGLI…PCML), 82 to 102 (IFIL…YWVL), 107 to 127 (IGVA…VVRL), 134 to 154 (AQAL…GLPL), 168 to 188 (FVLI…LLPV), 207 to 227 (PALL…FTAY), 244 to 264 (FTTI…MLFS), 272 to 292 (AGFL…LLPL), 297 to 317 (WSLS…SLGM), 331 to 351 (VAMA…ALLG), and 363 to 383 (IGYM…FTFV).

It belongs to the major facilitator superfamily. SotB (TC 2.A.1.2) family.

Its subcellular location is the cell inner membrane. Functionally, involved in the efflux of sugars. The physiological role may be the reduction of the intracellular concentration of toxic sugars or sugar metabolites. This Pectobacterium atrosepticum (strain SCRI 1043 / ATCC BAA-672) (Erwinia carotovora subsp. atroseptica) protein is Probable sugar efflux transporter.